Consider the following 150-residue polypeptide: 16 kDa phloem protein 1 (150 aa).

One can recognise a C2 domain in the interval methionine 1 to serine 108. Ca(2+) contacts are provided by aspartate 20, aspartate 27, aspartate 78, aspartate 80, and aspartate 86.

Requires Ca(2+) as cofactor. In terms of tissue distribution, sieve elements of leaves, stems, roots and flowers.

Binds to both sense and antisense RNA. Interacts with mesophyll plasmodesmata to mediate its own cell-to-cell transport and potentiate RNA trafficking. The sequence is that of 16 kDa phloem protein 1 (PP16-1) from Cucurbita maxima (Pumpkin).